Here is a 540-residue protein sequence, read N- to C-terminus: Chaperonin GroEL (540 aa).

ATP contacts are provided by residues 30-33, 87-91, G414, 479-481, and D495; these read TLGP, DGTTT, and NAL.

Belongs to the chaperonin (HSP60) family. As to quaternary structure, forms a cylinder of 14 subunits composed of two heptameric rings stacked back-to-back. Interacts with the co-chaperonin GroES.

It is found in the cytoplasm. It carries out the reaction ATP + H2O + a folded polypeptide = ADP + phosphate + an unfolded polypeptide.. Functionally, together with its co-chaperonin GroES, plays an essential role in assisting protein folding. The GroEL-GroES system forms a nano-cage that allows encapsulation of the non-native substrate proteins and provides a physical environment optimized to promote and accelerate protein folding. The chain is Chaperonin GroEL from Carboxydothermus hydrogenoformans (strain ATCC BAA-161 / DSM 6008 / Z-2901).